The chain runs to 296 residues: Glycine--tRNA ligase alpha subunit (296 aa).

Belongs to the class-II aminoacyl-tRNA synthetase family. Tetramer of two alpha and two beta subunits.

The protein resides in the cytoplasm. It carries out the reaction tRNA(Gly) + glycine + ATP = glycyl-tRNA(Gly) + AMP + diphosphate. In Polynucleobacter necessarius subsp. necessarius (strain STIR1), this protein is Glycine--tRNA ligase alpha subunit.